Reading from the N-terminus, the 315-residue chain is Methionyl-tRNA formyltransferase (315 aa).

Residue 110–113 (SLLP) coordinates (6S)-5,6,7,8-tetrahydrofolate.

The protein belongs to the Fmt family.

The catalysed reaction is L-methionyl-tRNA(fMet) + (6R)-10-formyltetrahydrofolate = N-formyl-L-methionyl-tRNA(fMet) + (6S)-5,6,7,8-tetrahydrofolate + H(+). Attaches a formyl group to the free amino group of methionyl-tRNA(fMet). The formyl group appears to play a dual role in the initiator identity of N-formylmethionyl-tRNA by promoting its recognition by IF2 and preventing the misappropriation of this tRNA by the elongation apparatus. The chain is Methionyl-tRNA formyltransferase from Mycolicibacterium paratuberculosis (strain ATCC BAA-968 / K-10) (Mycobacterium paratuberculosis).